Consider the following 119-residue polypeptide: Hydrogenase maturation factor HypA (119 aa).

Residue H2 coordinates Ni(2+). Residues C73, C76, C89, and C92 each coordinate Zn(2+).

This sequence belongs to the HypA/HybF family.

Its function is as follows. Involved in the maturation of [NiFe] hydrogenases. Required for nickel insertion into the metal center of the hydrogenase. This Dehalococcoides mccartyi (strain ATCC BAA-2100 / JCM 16839 / KCTC 5957 / BAV1) protein is Hydrogenase maturation factor HypA.